The following is a 115-amino-acid chain: Androgen-binding protein homolog (115 aa).

Positions 1-23 (MKGTLLLLALLVTGELGFQTTEA) are cleaved as a signal peptide.

Belongs to the secretoglobin family.

The protein localises to the secreted. The protein is Androgen-binding protein homolog of Mesocricetus auratus (Golden hamster).